The chain runs to 329 residues: GTP 3',8-cyclase (329 aa).

One can recognise a Radical SAM core domain in the interval 8–234 (VFARKFYYLR…QLRQRSDGPA (227 aa)). Arginine 17 provides a ligand contact to GTP. 2 residues coordinate [4Fe-4S] cluster: cysteine 24 and cysteine 28. Residue tyrosine 30 coordinates S-adenosyl-L-methionine. Position 31 (cysteine 31) interacts with [4Fe-4S] cluster. Residue arginine 68 coordinates GTP. Residue glycine 72 coordinates S-adenosyl-L-methionine. Threonine 99 contacts GTP. S-adenosyl-L-methionine is bound at residue serine 123. Lysine 160 contacts GTP. Methionine 194 serves as a coordination point for S-adenosyl-L-methionine. Cysteine 257 and cysteine 260 together coordinate [4Fe-4S] cluster. 262–264 (RLR) provides a ligand contact to GTP. [4Fe-4S] cluster is bound at residue cysteine 274.

The protein belongs to the radical SAM superfamily. MoaA family. Monomer and homodimer. [4Fe-4S] cluster is required as a cofactor.

The enzyme catalyses GTP + AH2 + S-adenosyl-L-methionine = (8S)-3',8-cyclo-7,8-dihydroguanosine 5'-triphosphate + 5'-deoxyadenosine + L-methionine + A + H(+). Its pathway is cofactor biosynthesis; molybdopterin biosynthesis. In terms of biological role, catalyzes the cyclization of GTP to (8S)-3',8-cyclo-7,8-dihydroguanosine 5'-triphosphate. This is GTP 3',8-cyclase from Shigella flexneri.